The primary structure comprises 264 residues: MFVPCGESAPDLAGFTLLMPAVSVGNVGQLAMDLIISTLNMSKIGYFYTDCLVPMVGNNPYATTEGNSTELSINAEVYSLPSRKLVALQLRSIFIKYKSKPFCEKLLSWVKSSGCARVIVLSSSHSYQRNDLQLRSTPFRYLLTPSMQKSVQNKIKSLNWEEMEKSRCIPEIDDSEFCIRIPGGGITKTLYDESCSKEIQMAVLLKFVSEGDNIPDALGLVEYLNEWLQILKPLSDDPTVSASRWKIPSSWRLLFGSGLPPALF.

T137 is subject to Phosphothreonine.

It belongs to the PSMG2 family. In terms of assembly, forms a heterodimer with PSMG1. The PSMG1-PSMG2 heterodimer interacts directly with the PSMA5 and PSMA7 proteasome alpha subunits. Post-translationally, degraded by the proteasome upon completion of 20S proteasome maturation. As to expression, widely expressed with highest levels in lung, brain and colon. Moderately expressed in muscle, stomach, spleen and heart. Weakly expressed in small intestine, pancreas and liver. Highly expressed in hepatocellular carcinomas with low levels in surrounding liver tissue.

It localises to the nucleus. Chaperone protein which promotes assembly of the 20S proteasome as part of a heterodimer with PSMG1. The PSMG1-PSMG2 heterodimer binds to the PSMA5 and PSMA7 proteasome subunits, promotes assembly of the proteasome alpha subunits into the heteroheptameric alpha ring and prevents alpha ring dimerization. The protein is Proteasome assembly chaperone 2 of Homo sapiens (Human).